The following is a 176-amino-acid chain: Ribosome maturation factor RimM (176 aa).

The region spanning proline 96–phenylalanine 176 is the PRC barrel domain.

This sequence belongs to the RimM family. Binds ribosomal protein uS19.

The protein localises to the cytoplasm. In terms of biological role, an accessory protein needed during the final step in the assembly of 30S ribosomal subunit, possibly for assembly of the head region. Essential for efficient processing of 16S rRNA. May be needed both before and after RbfA during the maturation of 16S rRNA. It has affinity for free ribosomal 30S subunits but not for 70S ribosomes. The polypeptide is Ribosome maturation factor RimM (Shewanella woodyi (strain ATCC 51908 / MS32)).